Consider the following 303-residue polypeptide: Coenzyme PQQ synthesis protein B (303 aa).

It belongs to the PqqB family.

It functions in the pathway cofactor biosynthesis; pyrroloquinoline quinone biosynthesis. Its function is as follows. May be involved in the transport of PQQ or its precursor to the periplasm. This chain is Coenzyme PQQ synthesis protein B, found in Pseudomonas savastanoi pv. phaseolicola (strain 1448A / Race 6) (Pseudomonas syringae pv. phaseolicola (strain 1448A / Race 6)).